Here is a 247-residue protein sequence, read N- to C-terminus: ATP synthase subunit a, chloroplastic (247 aa).

A run of 5 helical transmembrane segments spans residues 38-58 (QVLI…AIAV), 95-115 (VPFI…GALL), 134-154 (INTT…AGLT), 199-219 (LVVV…VMFL), and 220-240 (GLFT…AYIG).

Belongs to the ATPase A chain family. In terms of assembly, F-type ATPases have 2 components, CF(1) - the catalytic core - and CF(0) - the membrane proton channel. CF(1) has five subunits: alpha(3), beta(3), gamma(1), delta(1), epsilon(1). CF(0) has four main subunits: a, b, b' and c.

The protein resides in the plastid. It localises to the chloroplast thylakoid membrane. Its function is as follows. Key component of the proton channel; it plays a direct role in the translocation of protons across the membrane. The polypeptide is ATP synthase subunit a, chloroplastic (atpI) (Spinacia oleracea (Spinach)).